The chain runs to 324 residues: Glyoxylate/hydroxypyruvate reductase B (324 aa).

Residues R237 and E266 contribute to the active site. The Proton donor role is filled by H285.

This sequence belongs to the D-isomer specific 2-hydroxyacid dehydrogenase family. GhrB subfamily. In terms of assembly, homodimer.

Its subcellular location is the cytoplasm. The enzyme catalyses glycolate + NADP(+) = glyoxylate + NADPH + H(+). The catalysed reaction is (R)-glycerate + NAD(+) = 3-hydroxypyruvate + NADH + H(+). It carries out the reaction (R)-glycerate + NADP(+) = 3-hydroxypyruvate + NADPH + H(+). Functionally, catalyzes the NADPH-dependent reduction of glyoxylate and hydroxypyruvate into glycolate and glycerate, respectively. The chain is Glyoxylate/hydroxypyruvate reductase B from Salmonella agona (strain SL483).